A 433-amino-acid chain; its full sequence is UDP-N-acetylglucosamine 1-carboxyvinyltransferase (433 aa).

34-35 (KN) is a binding site for phosphoenolpyruvate. Arg-104 contacts UDP-N-acetyl-alpha-D-glucosamine. Cys-128 serves as the catalytic Proton donor. Residue Cys-128 is modified to 2-(S-cysteinyl)pyruvic acid O-phosphothioketal. UDP-N-acetyl-alpha-D-glucosamine is bound by residues Asp-320 and Ile-342.

This sequence belongs to the EPSP synthase family. MurA subfamily.

The protein resides in the cytoplasm. It carries out the reaction phosphoenolpyruvate + UDP-N-acetyl-alpha-D-glucosamine = UDP-N-acetyl-3-O-(1-carboxyvinyl)-alpha-D-glucosamine + phosphate. Its pathway is cell wall biogenesis; peptidoglycan biosynthesis. Its function is as follows. Cell wall formation. Adds enolpyruvyl to UDP-N-acetylglucosamine. The polypeptide is UDP-N-acetylglucosamine 1-carboxyvinyltransferase (Synechococcus sp. (strain CC9605)).